We begin with the raw amino-acid sequence, 214 residues long: Elongation factor Ts (214 aa).

Residues 80 to 83 (TDFV) form an involved in Mg(2+) ion dislocation from EF-Tu region.

It belongs to the EF-Ts family.

It localises to the cytoplasm. Associates with the EF-Tu.GDP complex and induces the exchange of GDP to GTP. It remains bound to the aminoacyl-tRNA.EF-Tu.GTP complex up to the GTP hydrolysis stage on the ribosome. The polypeptide is Elongation factor Ts (Syntrophomonas wolfei subsp. wolfei (strain DSM 2245B / Goettingen)).